Here is a 201-residue protein sequence, read N- to C-terminus: UPF0637 protein LSEI_1198 (201 aa).

This sequence belongs to the UPF0637 family.

The polypeptide is UPF0637 protein LSEI_1198 (Lacticaseibacillus paracasei (strain ATCC 334 / BCRC 17002 / CCUG 31169 / CIP 107868 / KCTC 3260 / NRRL B-441) (Lactobacillus paracasei)).